The following is a 163-amino-acid chain: Interleukin-31 (163 aa).

The signal sequence occupies residues 1 to 23 (MIFHTGTTKPTLVLLCCIGTWLA). N-linked (GlcNAc...) asparagine glycosylation is found at Asn-55, Asn-84, and Asn-124.

It is found in the secreted. In terms of biological role, activates STAT3 and possibly STAT1 and STAT5 through the IL31 heterodimeric receptor composed of IL31RA and OSMR. May function in skin immunity. Enhances myeloid progenitor cell survival in vitro. Induces RETNLA and serum amyloid A protein expression in macrophages. This chain is Interleukin-31 (Il31), found in Mus musculus (Mouse).